Consider the following 402-residue polypeptide: Subtilisin-like protease 9 (402 aa).

The signal sequence occupies residues 1-20 (MGFFRQLFSLSLCALSLAIP). Positions 21–120 (SKLIGLENTQ…VEVDRVVKLD (100 aa)) are excised as a propeptide. The region spanning 36–119 (SYIVVMKSTI…YVEVDRVVKL (84 aa)) is the Inhibitor I9 domain. One can recognise a Peptidase S8 domain in the interval 130–402 (SWGLGRISHK…RKLLYNGSGA (273 aa)). Active-site charge relay system residues include aspartate 162 and histidine 193. The N-linked (GlcNAc...) asparagine glycan is linked to asparagine 254. The Charge relay system role is filled by serine 348. N-linked (GlcNAc...) asparagine glycans are attached at residues asparagine 390 and asparagine 398.

It belongs to the peptidase S8 family.

It localises to the secreted. Secreted subtilisin-like serine protease with keratinolytic activity that contributes to pathogenicity. This chain is Subtilisin-like protease 9 (SUB9), found in Arthroderma benhamiae (strain ATCC MYA-4681 / CBS 112371) (Trichophyton mentagrophytes).